Reading from the N-terminus, the 620-residue chain is Glutathione-regulated potassium-efflux system protein KefC (620 aa).

Transmembrane regions (helical) follow at residues 4 to 24, 26 to 46, 54 to 74, 90 to 110, 114 to 134, 149 to 169, 178 to 198, 218 to 238, 270 to 290, 294 to 314, 327 to 347, and 359 to 379; these read HTLIQALIYLGSAALIVPIAV, LGLGSVLGYLIAGCIIGPWGL, SILHFAEIGVVLMLFIIGLEL, GALQMVICGGLLGLFCMLLGL, VAELIGMTLALSSTAIAMQAM, FAVLLFQDIAAIPLVAMIPLL, MGAFALSALKVAGALVLVVLL, VFSAVALFLVFGFGLLLEEVG, GLLLGLFFIGVGMSIDFGTLL, LRIVILLLGFLIIKIAMLWLI, WFAVLLGQGSEFAFVVFGAAQ, and SLTLAVALSMAATPILLVILN. An RCK N-terminal domain is found at 399-518; it reads QPRVIIAGFG…AGVEKPERET (120 aa). The segment at 597-620 is disordered; sequence GWQGTEEGKHTGNMADEPETKPSS.

This sequence belongs to the monovalent cation:proton antiporter 2 (CPA2) transporter (TC 2.A.37) family. KefC subfamily. In terms of assembly, homodimer. Interacts with the regulatory subunit KefF.

Its subcellular location is the cell inner membrane. Pore-forming subunit of a potassium efflux system that confers protection against electrophiles. Catalyzes K(+)/H(+) antiport. This is Glutathione-regulated potassium-efflux system protein KefC from Escherichia coli O7:K1 (strain IAI39 / ExPEC).